Here is a 1114-residue protein sequence, read N- to C-terminus: Transcriptional repressor NF-X1 (1114 aa).

The tract at residues 9-26 is interaction with PABPC1 and PABC4; that stretch reads GTFKFNTDAAEFIPQERK. Disordered regions lie at residues 20-220, 232-287, and 299-325; these read FIPQ…CRKP, QRRY…PTKS, and KSSRRVNQEKTAVRRQDPQVLSPFPRG. Residues Ser-50, Ser-81, Ser-92, Ser-126, Ser-130, and Ser-147 each carry the phosphoserine modification. 2 stretches are compositionally biased toward polar residues: residues 72-103 and 121-142; these read SYASGSKPKSPQGFFQSSNKSLKNHGLQNQPW and LSEQTSDTSSLESVARSESGTN. 4 stretches are compositionally biased toward basic and acidic residues: residues 143-156, 185-202, 232-248, and 304-315; these read PREHSPSESEKEVV, LRSEWGNRMSPKSEDENT, QRRYPQKRPPWEVEGAR, and VNQEKTAVRRQD. The residue at position 320 (Ser-320) is a Phosphoserine. The RING-type; atypical zinc-finger motif lies at 352-403; the sequence is CMVCCELVQVTAPVWSCQSCFHVFHLNCIKKWARSPASHADGQSGWRCPACQ. 8 consecutive NF-X1-type zinc fingers follow at residues 447–465, 500–519, 561–580, 626–649, 688–707, 715–734, 826–848, and 857–878; these read CPHSCNLLCHPGPCPPCPA, CGQHHCAELCHGGQCQPCRI, CGSHTCSQVCHPQPCQPCPR, CGSSDFIHTCEKLCHEGDCGPCSR, CGRHKCNEICCVDKEHKCPL, CGLHRCEEPCHRGNCQTCWQ, CGMHKCQRLCHKGECLVDEACKQ, and CGHPCMAPCHPSLPCPVTACKA. Residues 988–1056 enclose the R3H domain; sequence LKFVSDVEKE…KRNVVVTAVR (69 aa). The segment at 1071–1095 is disordered; the sequence is ERETQTRPPPPIPHHRHQADKAPGS.

Belongs to the NFX1 family. In terms of assembly, interacts with PABPC1 and PABPC4. In terms of tissue distribution, ubiquitously expressed, with highest levels in thymus.

The protein localises to the nucleus. Functionally, binds to the X-box motif of MHC class II genes and represses their expression. May play an important role in regulating the duration of an inflammatory response by limiting the period in which MHC class II molecules are induced by interferon-gamma. Together with PABPC1 or PABPC4, acts as a coactivator for TERT expression. Mediates E2-dependent ubiquitination. The sequence is that of Transcriptional repressor NF-X1 (Nfx1) from Mus musculus (Mouse).